A 1064-amino-acid chain; its full sequence is MASESETLNPSARIMTFYPTMEEFRNFSRYIAYIESQGAHRAGLAKVVPPKEWKPRASYDDIDDLVIPAPIQQLVTGQSGLFTQYNIQKKAMTVREFRKIANSDKYCTPRYSEFEELERKYWKNLTFNPPIYGADVNGTLYEKHVDEWNIGRLRTILDLVEKESGITIEGVNTPYLYFGMWKTSFAWHTEDMDLYSINYLHFGEPKSWYSVPPEHGKRLERLAKGFFPGSAQSCEAFLRHKMTLISPLMLKKYGIPFDKVTQEAGEFMITFPYGYHAGFNHGFNCAESTNFATRRWIEYGKQAVLCSCRKDMVKISMDVFVRKFQPERYKLWKAGKDNTVIDHTLPTPEAAEFLKESELPPRAGNEEECPEDDMEGVEDGEEGDLKTSLAKHRIGTKRHRVCLEIPQEVSQSELFPKEDLSSEQYEMTECPAALAPVRPTHSSVRQVEDGLTFPDYSDSTEVKFEELKNVKLEEEDEEEEQEAAALDLSVNPASVGGRLVFSGSKKKSSSSLGSGSSRDSVSSDSETSEPLSCRAQGQTGVLTVHSYAKGDGRVTVGEPCMRKKGSTARSFSERELAEVADEYMFSLEENKKSKGRRQPLSKLPRHHPLVLQECVSDDETSEQLTPEEEAEETEAWAKPLSQLWQNRPPNFEAEKEFNETMAQQAPHCAVCMIFQTYHQVEFGGFNQNCGNASDLAPQKQRTKPLIPEMCFTSTGCGTDINLSTPYLEEDGTSILVSCKKCSVRVHASCYGVPPAKASEDWMCSRCSANALEEDCCLCSLRGGALQRANDDRWVHVSCAVAILEARFVNIAERSPVDVSKIPLPRFKLKCIFCKKRRKRTAGCCVQCSHGRCPTAFHVSCAQAAGVMMQPDDWPFVVFITCFRHKIPNLERAKGALQSITAGQKVISKHKNGRFYQCEVVRLTTETFYEVNFDDGSFSDNLYPEDIVSQDCLQFGPPAEGEVVQVRWTDGQVYGAKFVASHPIQMYQVEFEDGSQLVVKRDDVYTLDEELPKRVKSRLSVASDMRFNEIFTEKEVKQEKKRQRVINSRYREDYIESALYRAIME.

N-acetylalanine is present on Ala-2. Residues 14-56 enclose the JmjN domain; that stretch reads IMTFYPTMEEFRNFSRYIAYIESQGAHRAGLAKVVPPKEWKPR. A 2-oxoglutarate-binding site is contributed by Tyr-132. The 167-residue stretch at 142–308 folds into the JmjC domain; that stretch reads EKHVDEWNIG…YGKQAVLCSC (167 aa). Residues His-188 and Glu-190 each contribute to the Fe cation site. Asn-198 and Lys-206 together coordinate 2-oxoglutarate. Cys-234 and His-240 together coordinate Zn(2+). Residue Lys-241 participates in 2-oxoglutarate binding. Residue His-276 coordinates Fe cation. Cys-306 and Cys-308 together coordinate Zn(2+). 3 disordered regions span residues 358 to 384, 501 to 537, and 616 to 642; these read ELPP…EEGD, FSGS…RAQG, and SDDE…PLSQ. Residues 366 to 382 are compositionally biased toward acidic residues; it reads EEECPEDDMEGVEDGEE. Residues 509–532 show a composition bias toward low complexity; it reads SSSLGSGSSRDSVSSDSETSEPLS. A Phosphoserine modification is found at Ser-523. Residues 597–638 form an interaction with NCOR1 region; that stretch reads RQPLSKLPRHHPLVLQECVSDDETSEQLTPEEEAEETEAWAK. Acidic residues predominate over residues 616–634; the sequence is SDDETSEQLTPEEEAEETE. Residues 709 to 767 form a PHD-type 1 zinc finger; it reads MCFTSTGCGTDINLSTPYLEEDGTSILVSCKKCSVRVHASCYGVPPAKASEDWMCSRCS. A C2HC pre-PHD-type zinc finger spans residues 772–805; it reads EEDCCLCSLRGGALQRANDDRWVHVSCAVAILEA. The PHD-type 2 zinc-finger motif lies at 828–885; that stretch reads LKCIFCKKRRKRTAGCCVQCSHGRCPTAFHVSCAQAAGVMMQPDDWPFVVFITCFRHK. Tudor domains are found at residues 897 to 954 and 955 to 1011; these read QSIT…CLQF and GPPA…EELP.

This sequence belongs to the JHDM3 histone demethylase family. In terms of assembly, interacts with histone deacetylase proteins HDAC1, HDAC2 and HDAC3. Interacts with RB and NCOR1. Interacts with VRK1. Fe(2+) serves as cofactor. Ubiquitinated by RNF8 and RNF168, leading to its degradation. Degradation promotes accessibility of H4K20me2 mark for DNA repair protein TP53BP1, which is then recruited. Also ubiquitinated by the SCF(FBXO22) complex; leading to proteasomal degradation.

It is found in the nucleus. It catalyses the reaction N(6),N(6),N(6)-trimethyl-L-lysyl(9)-[histone H3] + 2 2-oxoglutarate + 2 O2 = N(6)-methyl-L-lysyl(9)-[histone H3] + 2 formaldehyde + 2 succinate + 2 CO2. The catalysed reaction is N(6),N(6),N(6)-trimethyl-L-lysyl(36)-[histone H3] + 2 2-oxoglutarate + 2 O2 = N(6)-methyl-L-lysyl(36)-[histone H3] + 2 formaldehyde + 2 succinate + 2 CO2. Functionally, histone demethylase that specifically demethylates 'Lys-9' and 'Lys-36' residues of histone H3, thereby playing a central role in histone code. Does not demethylate histone H3 'Lys-4', H3 'Lys-27' nor H4 'Lys-20'. Demethylates trimethylated H3 'Lys-9' and H3 'Lys-36' residue, while it has no activity on mono- and dimethylated residues. Demethylation of Lys residue generates formaldehyde and succinate. Participates in transcriptional repression of ASCL2 and E2F-responsive promoters via the recruitment of histone deacetylases and NCOR1, respectively. The chain is Lysine-specific demethylase 4A (KDM4A) from Pongo abelii (Sumatran orangutan).